A 458-amino-acid chain; its full sequence is UDP-N-acetylmuramate--L-alanine ligase (458 aa).

118 to 124 (GTHGKTT) is a binding site for ATP.

It belongs to the MurCDEF family.

Its subcellular location is the cytoplasm. The catalysed reaction is UDP-N-acetyl-alpha-D-muramate + L-alanine + ATP = UDP-N-acetyl-alpha-D-muramoyl-L-alanine + ADP + phosphate + H(+). Its pathway is cell wall biogenesis; peptidoglycan biosynthesis. Cell wall formation. This chain is UDP-N-acetylmuramate--L-alanine ligase, found in Clostridium botulinum (strain Loch Maree / Type A3).